A 329-amino-acid polypeptide reads, in one-letter code: GTP 3',8-cyclase (329 aa).

The Radical SAM core domain maps to 8–234 (AFARKFYYLR…QQRARSDGPA (227 aa)). GTP is bound at residue R17. [4Fe-4S] cluster contacts are provided by C24 and C28. Y30 contributes to the S-adenosyl-L-methionine binding site. Residue C31 participates in [4Fe-4S] cluster binding. Position 68 (R68) interacts with GTP. G72 lines the S-adenosyl-L-methionine pocket. GTP is bound at residue T99. Residue S123 coordinates S-adenosyl-L-methionine. Residue K160 coordinates GTP. M194 serves as a coordination point for S-adenosyl-L-methionine. The [4Fe-4S] cluster site is built by C257 and C260. Position 262–264 (262–264 (RLR)) interacts with GTP. Residue C274 coordinates [4Fe-4S] cluster.

This sequence belongs to the radical SAM superfamily. MoaA family. As to quaternary structure, monomer and homodimer. It depends on [4Fe-4S] cluster as a cofactor.

The catalysed reaction is GTP + AH2 + S-adenosyl-L-methionine = (8S)-3',8-cyclo-7,8-dihydroguanosine 5'-triphosphate + 5'-deoxyadenosine + L-methionine + A + H(+). Its pathway is cofactor biosynthesis; molybdopterin biosynthesis. Its function is as follows. Catalyzes the cyclization of GTP to (8S)-3',8-cyclo-7,8-dihydroguanosine 5'-triphosphate. The chain is GTP 3',8-cyclase from Pectobacterium atrosepticum (strain SCRI 1043 / ATCC BAA-672) (Erwinia carotovora subsp. atroseptica).